Here is a 287-residue protein sequence, read N- to C-terminus: Universal stress protein Slr1230 (287 aa).

This sequence belongs to the universal stress protein A family.

The chain is Universal stress protein Slr1230 from Synechocystis sp. (strain ATCC 27184 / PCC 6803 / Kazusa).